Consider the following 683-residue polypeptide: DNA ligase (683 aa).

NAD(+) is bound by residues 35–39, 81–82, and Glu112; these read DAEYD and SL. The N6-AMP-lysine intermediate role is filled by Lys114. The NAD(+) site is built by Arg135, Glu170, Lys277, and Lys301. Residues Cys395, Cys398, Cys411, and Cys417 each contribute to the Zn(2+) site. A BRCT domain is found at 601 to 683; that stretch reads SSNSVLNNKV…YRMINSEVSE (83 aa).

This sequence belongs to the NAD-dependent DNA ligase family. LigA subfamily. It depends on Mg(2+) as a cofactor. Requires Mn(2+) as cofactor.

It catalyses the reaction NAD(+) + (deoxyribonucleotide)n-3'-hydroxyl + 5'-phospho-(deoxyribonucleotide)m = (deoxyribonucleotide)n+m + AMP + beta-nicotinamide D-nucleotide.. DNA ligase that catalyzes the formation of phosphodiester linkages between 5'-phosphoryl and 3'-hydroxyl groups in double-stranded DNA using NAD as a coenzyme and as the energy source for the reaction. It is essential for DNA replication and repair of damaged DNA. In Wolbachia sp. subsp. Brugia malayi (strain TRS), this protein is DNA ligase.